A 479-amino-acid chain; its full sequence is BRAP2 RING ZnF UBP domain-containing protein 2 (479 aa).

The RING-type; atypical zinc-finger motif lies at 167–207 (CPVCLERLDQDTGGILTTMCNHSFHCSCISNWPDSSCPVCR). The segment at 201–294 (SSCPVCRYCQ…GKLVELNSHG (94 aa)) adopts a UBP-type; degenerate zinc-finger fold. Zn(2+)-binding residues include Cys218, Cys221, Cys230, Cys233, Cys238, His245, His249, and His255. Residues 328–442 (NELLQAQLEN…MAQMDGESEV (115 aa)) adopt a coiled-coil conformation. A disordered region spans residues 434–479 (AQMDGESEVSETKEVQDATVSTTNTSSSGAGNVIHANKKKSNRRKG). Residues 451-466 (ATVSTTNTSSSGAGNV) are compositionally biased toward low complexity. The segment covering 469–479 (ANKKKSNRRKG) has biased composition (basic residues).

Component of the heteromeric E3 ligase complex made of BRIZ1 and BRIZ2. Forms heterooligomers with BRIZ1 via coiled-coil domains.

The enzyme catalyses S-ubiquitinyl-[E2 ubiquitin-conjugating enzyme]-L-cysteine + [acceptor protein]-L-lysine = [E2 ubiquitin-conjugating enzyme]-L-cysteine + N(6)-ubiquitinyl-[acceptor protein]-L-lysine.. It functions in the pathway protein modification; protein ubiquitination. In terms of biological role, RING-type ubiquitin E3 ligase that binds ubiquitin and is required for seed germination and post-germination growth. The protein is BRAP2 RING ZnF UBP domain-containing protein 2 of Arabidopsis thaliana (Mouse-ear cress).